The primary structure comprises 457 residues: Cell division protein FtsA (457 aa).

Belongs to the FtsA/MreB family. Self-interacts. Interacts with FtsZ.

It is found in the cell membrane. Functionally, cell division protein that is involved in the assembly of the Z ring. May serve as a membrane anchor for the Z ring. Increased expression restores growth to a PBP2b (penA) deletion strain as well as mreCD and rodA deletions, but not gpsB or rodZ deletions. Does not restore wild-type cell morphology to the penA deletion. In Streptococcus pneumoniae serotype 2 (strain D39 / NCTC 7466), this protein is Cell division protein FtsA.